A 470-amino-acid polypeptide reads, in one-letter code: Nuclear receptor ROR-beta (470 aa).

A DNA-binding region (nuclear receptor) is located at residues 18–93 (VIPCKICGDK…LGMSRDAVKF (76 aa)). 2 NR C4-type zinc fingers span residues 21–41 (CKIC…CEGC) and 57–81 (CPRQ…LQKC). Residues 104–117 (LYAEVQKHQQRLQE) are compositionally biased toward basic and acidic residues. The interval 104 to 127 (LYAEVQKHQQRLQEQRQQQSGEAE) is disordered. Residues 222–460 (EIDRIAQNII…TLFPPLYKEL (239 aa)) enclose the NR LBD domain. An AF-2 motif is present at residues 456 to 461 (LYKELF).

The protein belongs to the nuclear hormone receptor family. NR1 subfamily. Monomer. Interacts with CRX.

It localises to the nucleus. The protein localises to the nucleoplasm. Functionally, nuclear receptor that binds DNA as a monomer to ROR response elements (RORE) containing a single core motif half-site 5'-AGGTCA-3' preceded by a short A-T-rich sequence. Considered to have intrinsic transcriptional activity, have some natural ligands such as all-trans retinoic acid (ATRA) and other retinoids which act as inverse agonists repressing the transcriptional activity. Required for normal postnatal development of rod and cone photoreceptor cells. Modulates rod photoreceptors differentiation at least by inducing the transcription factor NRL-mediated pathway. In cone photoreceptor cells, regulates transcription of OPN1SW. Involved in the regulation of the period length and stability of the circadian rhythm. May control cytoarchitectural patterning of neocortical neurons during development. May act in a dose-dependent manner to regulate barrel formation upon innervation of layer IV neurons by thalamocortical axons. May play a role in the suppression of osteoblastic differentiation through the inhibition of RUNX2 transcriptional activity. Isoform 1 is critical for hindlimb motor control and for the differentiation of amacrine and horizontal cells in the retina. Regulates the expression of PTF1A synergistically with FOXN4. In Homo sapiens (Human), this protein is Nuclear receptor ROR-beta (RORB).